We begin with the raw amino-acid sequence, 431 residues long: Putative malic acid transport protein (431 aa).

The next 10 helical transmembrane spans lie at 30–50 (FTWA…VTSL), 62–82 (GKII…CITF), 101–121 (VLFM…LYPY), 136–156 (ILYW…FYSL), 167–187 (IIPA…IASA), 201–221 (VVAG…VYAV), 239–259 (GMFI…DLAF), 284–304 (FMAL…FVSV), 318–338 (VSWF…QELG), and 346–366 (VCIV…ILIL). Basic and acidic residues predominate over residues 402–424 (EEEKDEAERSKRKAEESDGKTTR). A disordered region spans residues 402–431 (EEEKDEAERSKRKAEESDGKTTRELTSGGL).

Belongs to the tellurite-resistance/dicarboxylate transporter (TDT) family.

The protein resides in the membrane. In Schizosaccharomyces pombe (strain 972 / ATCC 24843) (Fission yeast), this protein is Putative malic acid transport protein.